Reading from the N-terminus, the 186-residue chain is Dynactin subunit 3 (186 aa).

Ala2 bears the N-acetylalanine mark.

The protein belongs to the dynactin subunit 3 family. As to quaternary structure, subunit of dynactin, a multiprotein complex part of a tripartite complex with dynein and a adapter, such as BICDL1, BICD2 or HOOK3. The dynactin complex is built around ACTR1A/ACTB filament and consists of an actin-related filament composed of a shoulder domain, a pointed end and a barbed end. Its length is defined by its flexible shoulder domain. The soulder is composed of 2 DCTN1 subunits, 4 DCTN2 and 2 DCTN3. The 4 DCNT2 (via N-terminus) bind the ACTR1A filament and act as molecular rulers to determine the length. The pointed end is important for binding dynein-dynactin cargo adapters. Consists of 4 subunits: ACTR10, DCNT4, DCTN5 and DCTN6. The barbed end is composed of a CAPZA1:CAPZB heterodimers, which binds ACTR1A/ACTB filament and dynactin and stabilizes dynactin.

The protein resides in the cytoplasm. It is found in the cytoskeleton. Its subcellular location is the microtubule organizing center. It localises to the centrosome. The protein localises to the chromosome. The protein resides in the centromere. It is found in the kinetochore. Its subcellular location is the spindle. It localises to the cleavage furrow. The protein localises to the midbody. Functionally, part of the dynactin complex that activates the molecular motor dynein for ultra-processive transport along microtubules. Together with dynein is involved in spindle assembly and cytokinesis. The chain is Dynactin subunit 3 from Sus scrofa (Pig).